We begin with the raw amino-acid sequence, 216 residues long: Splicing factor U2AF 23 kDa subunit (216 aa).

The segment at 12-40 adopts a C3H1-type 1 zinc-finger fold; sequence EQDKVNCSFYYKIGACRHGERCSRKHVKP. One can recognise an RRM domain in the interval 44–141; sequence QTILCPNMYK…RPVYAELSPV (98 aa). The C3H1-type 2 zinc finger occupies 143–170; the sequence is DFREACCRQHETSECQRGGLCNFMHAKK. A disordered region spans residues 194–216; the sequence is EMKKEPNSDSTNRWVSVTAERKN.

As to quaternary structure, forms a heterodimer with the U2AF large subunit. Can also form a homodimer. U2AF large subunit (U2AF59), U2AF small subunit (U2AF23) and SF1 (bpb1) interact to form a complex required for complex A formation. Interacts with cwf13.

It localises to the nucleus. Its function is as follows. Necessary for the splicing of pre-mRNA. The SF1-U2AF59-U2AF23 complex has a role in the recognition of the branch site (5'-UACUAAC-3'), the pyrimidine tract and the 3'-splice site at the 3'-end of introns. This is Splicing factor U2AF 23 kDa subunit from Schizosaccharomyces pombe (strain 972 / ATCC 24843) (Fission yeast).